The sequence spans 431 residues: Tryptophan synthase beta chain 2 (431 aa).

The residue at position 111 (Lys111) is an N6-(pyridoxal phosphate)lysine.

Belongs to the TrpB family. In terms of assembly, tetramer of two alpha and two beta chains. Pyridoxal 5'-phosphate serves as cofactor.

The catalysed reaction is (1S,2R)-1-C-(indol-3-yl)glycerol 3-phosphate + L-serine = D-glyceraldehyde 3-phosphate + L-tryptophan + H2O. It functions in the pathway amino-acid biosynthesis; L-tryptophan biosynthesis; L-tryptophan from chorismate: step 5/5. Functionally, the beta subunit is responsible for the synthesis of L-tryptophan from indole and L-serine. This is Tryptophan synthase beta chain 2 (trpB2) from Sulfurisphaera tokodaii (strain DSM 16993 / JCM 10545 / NBRC 100140 / 7) (Sulfolobus tokodaii).